The following is a 121-amino-acid chain: uncharacterized protein (121 aa).

This is an uncharacterized protein from Streptococcus pyogenes serotype M6 (strain ATCC BAA-946 / MGAS10394).